The primary structure comprises 502 residues: Potassium channel KAT3 (502 aa).

Residues 1–67 (MPRSSRMNLW…PYDPRYKVWE (67 aa)) lie on the Cytoplasmic side of the membrane. The chain crosses the membrane as a helical span at residues 68–88 (TFLIILVVYSAWICPLEFAFL). Residues 89–95 (RYLPSAP) are Extracellular-facing. A helical transmembrane segment spans residues 96-116 (FVVDDVVNGFFAVDIMLTFFV). At 117–138 (PFVDKKSYLLVNDPKKIAVRYL) the chain is on the cytoplasmic side. The helical transmembrane segment at 139-159 (SSWFVFDVCSTVPFHSISLLF) threads the bilayer. At 160–169 (NEHGHDLGFK) the chain is on the extracellular side. A helical; Voltage-sensor transmembrane segment spans residues 170-190 (FLNVLRLWRLRRVSSMFARLE). The Cytoplasmic segment spans residues 191–204 (KDIRFNYAVIRCTK). Residues 205–225 (LISVTLFAIHCAGCINYLIAD) traverse the membrane as a helical segment. Over 226 to 252 (RYPDPRRTWIGAVMPNFREDGLWIRYV) the chain is Extracellular. Positions 253–272 (TAMYWSITTLTTTGYGDLHA) form an intramembrane region, pore-forming. Residues 273 to 276 (ENAR) lie on the Extracellular side of the membrane. Residues 277-297 (EMLFGICYMLFNLWLTAYLIG) form a helical membrane-spanning segment. The Cytoplasmic portion of the chain corresponds to 298–502 (NMTNLVVHST…IRSNLQQVNV (205 aa)). 381 to 500 (LFKGVSSRFI…DIIRSNLQQV (120 aa)) lines the a nucleoside 3',5'-cyclic phosphate pocket.

The protein belongs to the potassium channel family. Plant (TC 1.A.1.4) subfamily.

The protein resides in the membrane. Its function is as follows. Probable inward-rectifying potassium channel. Assuming opened or closed conformations in response to the voltage difference across the membrane, the channel is activated by hyperpolarization. In Oryza sativa subsp. japonica (Rice), this protein is Potassium channel KAT3.